Here is a 344-residue protein sequence, read N- to C-terminus: Phosphate acyltransferase (344 aa).

Belongs to the PlsX family. As to quaternary structure, homodimer. Probably interacts with PlsY.

It is found in the cytoplasm. It carries out the reaction a fatty acyl-[ACP] + phosphate = an acyl phosphate + holo-[ACP]. It participates in lipid metabolism; phospholipid metabolism. In terms of biological role, catalyzes the reversible formation of acyl-phosphate (acyl-PO(4)) from acyl-[acyl-carrier-protein] (acyl-ACP). This enzyme utilizes acyl-ACP as fatty acyl donor, but not acyl-CoA. This is Phosphate acyltransferase from Acaryochloris marina (strain MBIC 11017).